We begin with the raw amino-acid sequence, 211 residues long: Regulator of G-protein signaling 2 (211 aa).

The necessary for membrane association stretch occupies residues Lys-32–Gln-66. Residues Leu-79 to Cys-116 form a necessary to inhibit protein synthesis region. Residues Ala-83 to Cys-199 form the RGS domain.

In terms of assembly, interacts with GNAQ. Does not interact with GNAI1 and GNAI3. Interacts with EIF2B5. Interacts with PRKG1 (isoform alpha). Phosphorylated by protein kinase C. Phosphorylation by PRKG1 leads to activation of RGS2 activity. As to expression, expressed in a wide variety of tissues.

The protein localises to the cell membrane. The protein resides in the cytoplasm. Its subcellular location is the nucleus. It is found in the nucleolus. Regulates G protein-coupled receptor signaling cascades. Inhibits signal transduction by increasing the GTPase activity of G protein alpha subunits, thereby driving them into their inactive GDP-bound form. It is involved in the negative regulation of the angiotensin-activated signaling pathway. Plays a role in the regulation of blood pressure in response to signaling via G protein-coupled receptors and GNAQ. Plays a role in regulating the constriction and relaxation of vascular smooth muscle. Binds EIF2B5 and blocks its activity, thereby inhibiting the translation of mRNA into protein. The protein is Regulator of G-protein signaling 2 (Rgs2) of Mus musculus (Mouse).